Consider the following 369-residue polypeptide: Replication factor C subunit 5 (369 aa).

The disordered stretch occupies residues 21 to 40; that stretch reads INKGKDVVGFGPPPQSKATP. 79 to 86 is an ATP binding site; that stretch reads GPPGTGKT.

Belongs to the activator 1 small subunits family. As to quaternary structure, heterotetramer of subunits RFC2, RFC3, RFC4 and RFC5 that can form a complex with RFC1.

It is found in the nucleus. Functionally, functions in cell replication and proliferation. May be involved in chromatin assembly and remodeling. Plays a role in the negative control of pathogenesis-related gene expression and systemic acquired resistance (SAR). The sequence is that of Replication factor C subunit 5 (RFC5) from Arabidopsis thaliana (Mouse-ear cress).